The chain runs to 136 residues: Large-conductance mechanosensitive channel (136 aa).

Helical transmembrane passes span 9-29 (AFAS…GAAF) and 79-99 (IQTI…VKAI).

The protein belongs to the MscL family. In terms of assembly, homopentamer.

Its subcellular location is the cell inner membrane. Its function is as follows. Channel that opens in response to stretch forces in the membrane lipid bilayer. May participate in the regulation of osmotic pressure changes within the cell. This is Large-conductance mechanosensitive channel from Shewanella baltica (strain OS223).